The following is a 276-amino-acid chain: NAD(+)--protein-threonine ADP-ribosyltransferase (276 aa).

Interacts directly with host ubiquitin.

It is found in the secreted. The protein resides in the host cell. The catalysed reaction is L-threonyl-[protein] + NAD(+) = O-(ADP-D-ribosyl)-L-threonyl-[protein] + nicotinamide + H(+). Its function is as follows. ADP-ribosyltransferase that specifically modifies host ubiquitin on 'Thr-66' residue, which causes the shutdown of polyubiquitin synthesis and disrupts the recognition and reversal of polyubiquitin in host cells during infection. Threonine ADP-ribosylation of ubiquitin prevents the transfer of ubiquitin from ubiquitin-activating enzyme E1 to ubiquitin-conjugating enzyme E2, which inhibits subsequent ubiquitin activation and leads to the shutdown of polyubiquitin synthesis in host cells. The modification also causes dysfunction of polyubiquitin chains in cells, thereby blocking host ubiquitin signaling. ADP-ribosylation by CteC is likely irreversible. Plays a crucial role in bacterial colonization in mice during infection. The sequence is that of NAD(+)--protein-threonine ADP-ribosyltransferase from Chromobacterium violaceum (strain ATCC 12472 / DSM 30191 / JCM 1249 / CCUG 213 / NBRC 12614 / NCIMB 9131 / NCTC 9757 / MK).